The primary structure comprises 376 residues: MSNKVARRLGKCLFVSGRRFESRQSILQLRTETLTDTPLSATLDQSQFSMFKAAEIVNAAAACAEAECIEQLKKTDVVPLLMNYLLGEEQILVADPTAVAAKLRKMVVGGAGKTVVISDFDYTLSRFANEQGERLSTTHGVFDDNVMRLKPELGQKFVDLKNKYYPIEFSPNLTMEEKIPHMEKWWGTSHSLIVNEKFSKNTIEDFVRQSRIVFKDGAEDFIEALDAHNIPLVIFSAGIGNIIEYFLQQKLGAIPRNTHFISNMILFDEDDNACAFSEPLIHTFCKNSSVIQKETSFFHDIAGRVNVILLGDSMGDIHMDVGVERDGPTLKVGYYNGSLDDTAALQHYEEVYDIVLIHDPTLNVAQKIVDIINSSH.

Asp119 acts as the Nucleophile in catalysis. The Mg(2+) site is built by Asp119 and Asp121. Asp121 acts as the Proton donor in catalysis. Residues Glu168, Ser189, 236–237, and Lys286 contribute to the substrate site; that span reads SA. Asp312 serves as a coordination point for Mg(2+).

It belongs to the pyrimidine 5'-nucleotidase family.

Its subcellular location is the cytoplasm. The catalysed reaction is a ribonucleoside 5'-phosphate + H2O = a ribonucleoside + phosphate. This is Putative cytosolic 5'-nucleotidase 3 from Caenorhabditis elegans.